An 88-amino-acid chain; its full sequence is Small ribosomal subunit protein uS15 (88 aa).

This sequence belongs to the universal ribosomal protein uS15 family. Part of the 30S ribosomal subunit. Forms a bridge to the 50S subunit in the 70S ribosome, contacting the 23S rRNA.

One of the primary rRNA binding proteins, it binds directly to 16S rRNA where it helps nucleate assembly of the platform of the 30S subunit by binding and bridging several RNA helices of the 16S rRNA. Its function is as follows. Forms an intersubunit bridge (bridge B4) with the 23S rRNA of the 50S subunit in the ribosome. In Mesomycoplasma flocculare (Mycoplasma flocculare), this protein is Small ribosomal subunit protein uS15.